The primary structure comprises 359 residues: Very-long-chain (3R)-3-hydroxyacyl-CoA dehydratase (359 aa).

The Cytoplasmic portion of the chain corresponds to methionine 1 to lysine 144. A CS domain is found at alanine 3–threonine 92. Residues leucine 109–arginine 133 adopt a coiled-coil conformation. The chain crosses the membrane as a helical span at residues glycine 145–methionine 165. At threonine 166 to aspartate 186 the chain is on the lumenal side. A helical transmembrane segment spans residues valine 187–valine 207. Residues lysine 208–threonine 209 are Cytoplasmic-facing. Residues glycine 210–glycine 230 traverse the membrane as a helical segment. Residues serine 231–proline 239 lie on the Lumenal side of the membrane. The helical transmembrane segment at valine 240–methionine 260 threads the bilayer. Residues leucine 261–threonine 277 are Cytoplasmic-facing. A helical transmembrane segment spans residues isoleucine 278 to isoleucine 298. Residues tyrosine 283 and glutamate 290 contribute to the active site. Residues proline 299–leucine 317 lie on the Lumenal side of the membrane. Residues serine 318–isoleucine 338 traverse the membrane as a helical segment. Residues asparagine 339–asparagine 359 lie on the Cytoplasmic side of the membrane.

This sequence belongs to the very long-chain fatty acids dehydratase HACD family.

It is found in the endoplasmic reticulum membrane. The enzyme catalyses a very-long-chain (3R)-3-hydroxyacyl-CoA = a very-long-chain (2E)-enoyl-CoA + H2O. It carries out the reaction (3R)-hydroxyhexadecanoyl-CoA = (2E)-hexadecenoyl-CoA + H2O. The protein operates within lipid metabolism; fatty acid biosynthesis. Catalyzes the third of the four reactions of the long-chain fatty acids elongation cycle. This endoplasmic reticulum-bound enzymatic process, allows the addition of two carbons to the chain of long- and very long-chain fatty acids/VLCFAs per cycle. This enzyme catalyzes the dehydration of the 3-hydroxyacyl-CoA intermediate into trans-2,3-enoyl-CoA, within each cycle of fatty acid elongation. Thereby, it participates in the production of VLCFAs of different chain lengths that are involved in multiple biological processes as precursors of membrane lipids and lipid mediators. Involved in Rac1-signaling pathways leading to the modulation of gene expression. In Danio rerio (Zebrafish), this protein is Very-long-chain (3R)-3-hydroxyacyl-CoA dehydratase.